The chain runs to 531 residues: Apolipoprotein N-acyltransferase (531 aa).

7 helical membrane passes run I8–V28, F34–V54, P69–G89, L105–A125, I136–G156, V178–I198, and A206–L226. In terms of domain architecture, CN hydrolase spans V243–G493. E287 functions as the Proton acceptor in the catalytic mechanism. K351 is a catalytic residue. Residue C405 is the Nucleophile of the active site. Residues I507–N527 traverse the membrane as a helical segment.

Belongs to the CN hydrolase family. Apolipoprotein N-acyltransferase subfamily.

It localises to the cell inner membrane. The enzyme catalyses N-terminal S-1,2-diacyl-sn-glyceryl-L-cysteinyl-[lipoprotein] + a glycerophospholipid = N-acyl-S-1,2-diacyl-sn-glyceryl-L-cysteinyl-[lipoprotein] + a 2-acyl-sn-glycero-3-phospholipid + H(+). It functions in the pathway protein modification; lipoprotein biosynthesis (N-acyl transfer). Functionally, catalyzes the phospholipid dependent N-acylation of the N-terminal cysteine of apolipoprotein, the last step in lipoprotein maturation. The chain is Apolipoprotein N-acyltransferase from Rhizobium meliloti (strain 1021) (Ensifer meliloti).